Here is a 364-residue protein sequence, read N- to C-terminus: UDP-N-acetylglucosamine--N-acetylmuramyl-(pentapeptide) pyrophosphoryl-undecaprenol N-acetylglucosamine transferase 1 (364 aa).

UDP-N-acetyl-alpha-D-glucosamine-binding positions include 10 to 12, N124, S195, I250, and Q295; that span reads TGG.

The protein belongs to the glycosyltransferase 28 family. MurG subfamily.

The protein localises to the cell membrane. It carries out the reaction di-trans,octa-cis-undecaprenyl diphospho-N-acetyl-alpha-D-muramoyl-L-alanyl-D-glutamyl-meso-2,6-diaminopimeloyl-D-alanyl-D-alanine + UDP-N-acetyl-alpha-D-glucosamine = di-trans,octa-cis-undecaprenyl diphospho-[N-acetyl-alpha-D-glucosaminyl-(1-&gt;4)]-N-acetyl-alpha-D-muramoyl-L-alanyl-D-glutamyl-meso-2,6-diaminopimeloyl-D-alanyl-D-alanine + UDP + H(+). The protein operates within cell wall biogenesis; peptidoglycan biosynthesis. Functionally, cell wall formation. Catalyzes the transfer of a GlcNAc subunit on undecaprenyl-pyrophosphoryl-MurNAc-pentapeptide (lipid intermediate I) to form undecaprenyl-pyrophosphoryl-MurNAc-(pentapeptide)GlcNAc (lipid intermediate II). This Bacillus cereus (strain ATCC 14579 / DSM 31 / CCUG 7414 / JCM 2152 / NBRC 15305 / NCIMB 9373 / NCTC 2599 / NRRL B-3711) protein is UDP-N-acetylglucosamine--N-acetylmuramyl-(pentapeptide) pyrophosphoryl-undecaprenol N-acetylglucosamine transferase 1.